The chain runs to 509 residues: Activin receptor type-1 (509 aa).

Residues 1–20 (MVDGVMILPVLMMMAFPSPS) form the signal peptide. Topologically, residues 21 to 123 (VEDEKPKVNQ…FPGTQNFHLE (103 aa)) are extracellular. N-linked (GlcNAc...) asparagine glycosylation occurs at N102. The helical transmembrane segment at 124–146 (VGLIILSVVFAVCLLACILGVAL) threads the bilayer. The Cytoplasmic portion of the chain corresponds to 147-509 (RKFKRRNQER…NSLDKLKTDC (363 aa)). Positions 178–207 (STLAELLDHSCTSGSGSGLPFLVQRTVARQ) constitute a GS domain. Residues 208 to 502 (ITLLECVGKG…KTLTKIDNSL (295 aa)) form the Protein kinase domain. ATP contacts are provided by residues 214–222 (VGKGRYGEV) and K235. Residue D336 is the Proton acceptor of the active site. The residue at position 501 (S501) is a Phosphoserine.

Belongs to the protein kinase superfamily. TKL Ser/Thr protein kinase family. TGFB receptor subfamily. In terms of assembly, interacts with FKBP1A. Interacts with FCHO1. Interacts with CLU. Interacts with type II receptors AMHR2 and ACVR2A. Interacts with BMP7. Interacts with BMP9. Interacts with BMP6 (when glycosylated); the interaction may induce HAMP expression. Interacts with TSC22D1/TSC-22. It depends on Mg(2+) as a cofactor. Mn(2+) is required as a cofactor. In terms of tissue distribution, highly expressed in bone during developmental stages. Expressed in normal parenchymal cells, endothelial cells, fibroblasts and tumor-derived epithelial cells.

The protein resides in the membrane. The enzyme catalyses L-threonyl-[receptor-protein] + ATP = O-phospho-L-threonyl-[receptor-protein] + ADP + H(+). It carries out the reaction L-seryl-[receptor-protein] + ATP = O-phospho-L-seryl-[receptor-protein] + ADP + H(+). Bone morphogenetic protein (BMP) type I receptor that is involved in a wide variety of biological processes, including bone, heart, cartilage, nervous, and reproductive system development and regulation. As a type I receptor, forms heterotetrameric receptor complexes with the type II receptors AMHR2, ACVR2A ors ACVR2B. Upon binding of ligands such as BMP7 or BMP9 to the heteromeric complexes, type II receptors transphosphorylate ACVR1 intracellular domain. In turn, ACVR1 kinase domain is activated and subsequently phosphorylates SMAD1/5/8 proteins that transduce the signal. In addition to its role in mediating BMP pathway-specific signaling, suppresses TGFbeta/activin pathway signaling by interfering with the binding of activin to its type II receptor. Besides canonical SMAD signaling, can activate non-canonical pathways such as p38 mitogen-activated protein kinases/MAPKs. May promote the expression of HAMP, potentially via its interaction with BMP6. In Mus musculus (Mouse), this protein is Activin receptor type-1 (Acvr1).